Reading from the N-terminus, the 220-residue chain is 1-Cys peroxiredoxin A (220 aa).

The Thioredoxin domain maps to 4–165; it reads LTIGDTVPNL…VVRAVDALQT (162 aa). Catalysis depends on Cys46, which acts as the Cysteine sulfenic acid (-SOH) intermediate. Positions 195 to 218 match the Bipartite nuclear localization signal motif; the sequence is KEKFPQGFDTADLPSGKGYLRFTK.

This sequence belongs to the peroxiredoxin family. Prx6 subfamily.

It is found in the nucleus. Its subcellular location is the cytoplasm. It catalyses the reaction a hydroperoxide + [thioredoxin]-dithiol = an alcohol + [thioredoxin]-disulfide + H2O. In terms of biological role, thiol-specific peroxidase that catalyzes the reduction of hydrogen peroxide and organic hydroperoxides to water and alcohols, respectively. Seems to contribute to the inhibition of germination during stress. The chain is 1-Cys peroxiredoxin A from Oryza sativa subsp. japonica (Rice).